Here is a 161-residue protein sequence, read N- to C-terminus: Phosphopantetheine adenylyltransferase (161 aa).

T10 is a substrate binding site. Residues 10–11 (TF) and H18 contribute to the ATP site. Positions 42, 74, and 88 each coordinate substrate. ATP-binding positions include 89–91 (GLR), E99, and 124–130 (WSFISSS).

It belongs to the bacterial CoaD family. As to quaternary structure, homohexamer. Mg(2+) serves as cofactor.

Its subcellular location is the cytoplasm. It carries out the reaction (R)-4'-phosphopantetheine + ATP + H(+) = 3'-dephospho-CoA + diphosphate. It functions in the pathway cofactor biosynthesis; coenzyme A biosynthesis; CoA from (R)-pantothenate: step 4/5. Reversibly transfers an adenylyl group from ATP to 4'-phosphopantetheine, yielding dephospho-CoA (dPCoA) and pyrophosphate. This is Phosphopantetheine adenylyltransferase from Edwardsiella ictaluri (strain 93-146).